Consider the following 138-residue polypeptide: Isochorismatase-like protein asqB (138 aa).

It belongs to the isochorismatase family.

It carries out the reaction [(1'E)-5'-(3',3'-dimethyloxiran-2'-yl)-3'-hydroxy-3'-methylpent-1'-en-1'-yl]-quinolinone B = yaequinolone C. The protein operates within secondary metabolite biosynthesis. It functions in the pathway alkaloid biosynthesis. It participates in mycotoxin biosynthesis. Its function is as follows. Isochorismatase-like protein; part of the gene cluster that mediates the biosynthesis of the aspoquinolone mycotoxins. Within the pathway, asqB converts [(1'E)-5'-(3',3'-dimethyloxiran-2'-yl)-3'-hydroxy-3'-methylpent-1'-en-1'-yl]-quinolinone B into yaequinolone C. The first step of the pathway is catalyzed by the nonribosomal peptide synthetase asqK that condenses anthranilic acid and O-methyl-L-tyrosine to produce 4'-methoxycyclopeptin. 4'-methoxycyclopeptin is then converted to 4'-methoxydehydrocyclopeptin by the ketoglutarate-dependent dioxygenase asqJ. AsqJ also converts its first product 4'-methoxydehydrocyclopeptin to 4'-methoxycyclopenin. The following conversion of 4'-methoxycyclopenin into 4'-methoxyviridicatin is catalyzed by the cyclopenase asqI. 4'-methoxyviridicatin is the precursor of quinolone natural products, and is further converted to quinolinone B. The prenyltransferase asqH1 then catalyzes the canonical Friedel-Crafts alkylation of quinolinone B with dimethylallyl cation to yield dimethylallyl quinolone, which is subjected to FAD-dependent dehydrogenation by the FAD-linked oxidoreductase asqF to yield conjugated aryl diene. The delta(3') double bond then serves as the site of the second alkylation with DMAPP catalyzed by the prenyltransferase asqH2 to yield a carbenium ion intermediate, which can be attacked by H(2)O to yield a styrenyl quinolone containing a C3'-hydroxyprenyl chain. The FAD-dependent monooxygenase asqG performs epoxidation of the terminal C7'-C8' olefin. Finally, after dehydratation of the epoxide at C3 by asqC, the quinolone epoxide rearrangement protein asqO catalyzes an enzymatic 3-exo-tet cyclization to yield the cyclopropyl-THF ring system in aspoquinolone. This Emericella nidulans (strain FGSC A4 / ATCC 38163 / CBS 112.46 / NRRL 194 / M139) (Aspergillus nidulans) protein is Isochorismatase-like protein asqB.